Reading from the N-terminus, the 491-residue chain is Probable G-protein coupled receptor Mth-like 7 (491 aa).

A signal peptide spans 1-22 (MRLPWVIFCTVLLLIFTNNSNA). Asn-18 and Asn-42 each carry an N-linked (GlcNAc...) asparagine glycan. Residues 23–167 (DIPGCNYYDT…EEVSIQIFNK (145 aa)) are Extracellular-facing. Disulfide bonds link Cys-27/Cys-80, Cys-82/Cys-87, and Cys-92/Cys-103. A helical membrane pass occupies residues 168–188 (CGLIVWFQDGKFWVTVDLFME). Over 189–222 (KQDYCLYRHNFDSDFPKSMWIIRHRCTSHISPGS) the chain is Cytoplasmic. The helical transmembrane segment at 223–243 (LEILIITMICFVLTIAVYLYI) threads the bilayer. Residues 244–252 (KKLRNVTGK) lie on the Extracellular side of the membrane. Asn-248 carries an N-linked (GlcNAc...) asparagine glycan. Residues 253-273 (CIVCCIVSRFIQCLIMILDHL) form a helical membrane-spanning segment. At 274–325 (NLLNGICSPAGYSSHFFRMASNLWLSVISYHTWKVLTSLNRVDPNYRFLRYN) the chain is on the cytoplasmic side. The chain crosses the membrane as a helical span at residues 326–346 (AFVWSTAAIMTGSIYIVNQIW). The Extracellular segment spans residues 347–372 (ENDPSKWNWLPLVGFIRCSVKDWHPS). Residues 373-393 (VWIYISGPSLALSTFNVAMFA) traverse the membrane as a helical segment. The Cytoplasmic portion of the chain corresponds to 394 to 434 (LTAIYIRKVKGGINKFTNEEEGRINCINFDSQTYLQFLRLS). A helical transmembrane segment spans residues 435–455 (IVMGLTWIFNVIPYSARLHIF). At 456–458 (WEW) the chain is on the extracellular side. Residues 459–479 (VGIISEYFHSAFGIVLFVLLV) form a helical membrane-spanning segment. Over 480-491 (LKRSTWTLMMDS) the chain is Cytoplasmic.

Belongs to the G-protein coupled receptor 2 family. Mth subfamily.

The protein resides in the cell membrane. This chain is Probable G-protein coupled receptor Mth-like 7 (mthl7), found in Drosophila melanogaster (Fruit fly).